Here is a 152-residue protein sequence, read N- to C-terminus: Nucleoside diphosphate kinase A (152 aa).

K12, F60, R88, and T94 together coordinate ATP. A Glycyl lysine isopeptide (Lys-Gly) (interchain with G-Cter in ubiquitin) cross-link involves residue K100. Residues R105 and N115 each coordinate ATP. H118 (pros-phosphohistidine intermediate) is an active-site residue. A phosphoserine mark is found at S120, S122, and S125.

This sequence belongs to the NDK family. Hexamer of two different chains: An and B (A6, A5B, A4B2, A3B3, A2B4, AB5, B6). Interacts with PRUNE1. Component of the SET complex, composed of at least ANP32A, APEX1, HMGB2, NME1, SET and TREX1. Within this complex, interacts directly with SET. Also interacts with TREX1, but only following translocation to the nucleus. The cofactor is Mg(2+). In terms of tissue distribution, isoform 1 is expressed in heart, brain, placenta, lung, liver, skeletal muscle, pancreas, spleen and thymus. Expressed in lung carcinoma cell lines but not in normal lung tissues. Isoform 2 is ubiquitously expressed and its expression is also related to tumor differentiation.

The protein localises to the cytoplasm. Its subcellular location is the nucleus. It carries out the reaction a 2'-deoxyribonucleoside 5'-diphosphate + ATP = a 2'-deoxyribonucleoside 5'-triphosphate + ADP. The enzyme catalyses a ribonucleoside 5'-diphosphate + ATP = a ribonucleoside 5'-triphosphate + ADP. Its activity is regulated as follows. Autophosphorylation at His-118 increases serine/threonine protein kinase activity of the enzyme. Interaction with the SET complex inhibits the endonuclease activity. Functionally, major role in the synthesis of nucleoside triphosphates other than ATP. The ATP gamma phosphate is transferred to the NDP beta phosphate via a ping-pong mechanism, using a phosphorylated active-site intermediate. Possesses nucleoside-diphosphate kinase, serine/threonine-specific protein kinase, geranyl and farnesyl pyrophosphate kinase, histidine protein kinase and 3'-5' exonuclease activities. Involved in cell proliferation, differentiation and development, signal transduction, G protein-coupled receptor endocytosis, and gene expression. Required for neural development including neural patterning and cell fate determination. During GZMA-mediated cell death, works in concert with TREX1. NME1 nicks one strand of DNA and TREX1 removes bases from the free 3' end to enhance DNA damage and prevent DNA end reannealing and rapid repair. This chain is Nucleoside diphosphate kinase A (NME1), found in Homo sapiens (Human).